We begin with the raw amino-acid sequence, 300 residues long: uncharacterized protein (300 aa).

The span at 1 to 11 shows a compositional bias: polar residues; the sequence is MYNEGVTSPSQ. The tract at residues 1–20 is disordered; it reads MYNEGVTSPSQLARKKNATD. Positions 1–92 form a DNA-binding region, recombinase; it reads MYNEGVTSPS…QEILITRKRR (92 aa). A coiled-coil region spans residues 162-249; the sequence is SKENYFKELS…DLEFQKIEKE (88 aa).

This is an uncharacterized protein from Bacillus subtilis (strain 168).